Reading from the N-terminus, the 486-residue chain is GDP-Man:Man(3)GlcNAc(2)-PP-Dol alpha-1,2-mannosyltransferase (486 aa).

Residues 1–16 (MAGPMCLCGMMRLLTA) are Lumenal-facing. Residues 17–37 (LFIPVLITSVGLCLIFVLLFI) traverse the membrane as a helical segment. Topologically, residues 38 to 229 (CTRLWVQRKK…SNNPVLSRLK (192 aa)) are cytoplasmic. Positions 230 to 250 (LIYYYLFALFYGWVGSCSDVI) form an intramembrane region, helical. Residues 251–393 (MVNSTWTFSH…IGLHTMWNEH (143 aa)) lie on the Cytoplasmic side of the membrane. The segment at residues 394 to 414 (FGIGIVECMAAGTIILAHNSG) is an intramembrane region (helical). Over 415-486 (GPKLDIVVPH…FLASSEPLFK (72 aa)) the chain is Cytoplasmic.

This sequence belongs to the glycosyltransferase group 1 family. Glycosyltransferase 4 subfamily.

The protein resides in the endoplasmic reticulum membrane. The enzyme catalyses an alpha-D-Man-(1-&gt;3)-[alpha-D-Man-(1-&gt;6)]-beta-D-Man-(1-&gt;4)-beta-D-GlcNAc-(1-&gt;4)-alpha-D-GlcNAc-diphospho-di-trans,poly-cis-dolichol + 2 GDP-alpha-D-mannose = an alpha-D-Man-(1-&gt;2)-alpha-D-Man-(1-&gt;2)-alpha-D-Man-(1-&gt;3)-[alpha-D-Man-(1-&gt;6)]-beta-D-Man-(1-&gt;4)-beta-D-GlcNAc-(1-&gt;4)-alpha-D-GlcNAc-diphospho-di-trans,poly-cis-dolichol + 2 GDP + 2 H(+). It participates in protein modification; protein glycosylation. Functionally, GDP-Man:Man(3)GlcNAc(2)-PP-Dol alpha-1,2-mannosyltransferase that operates in the biosynthetic pathway of dolichol-linked oligosaccharides, the glycan precursors employed in protein asparagine (N)-glycosylation. The assembly of dolichol-linked oligosaccharides begins on the cytosolic side of the endoplasmic reticulum membrane and finishes in its lumen. The sequential addition of sugars to dolichol pyrophosphate produces dolichol-linked oligosaccharides containing fourteen sugars, including two GlcNAcs, nine mannoses and three glucoses. Once assembled, the oligosaccharide is transferred from the lipid to nascent proteins by oligosaccharyltransferases. Catalyzes, on the cytoplasmic face of the endoplasmic reticulum, the addition of the fourth and fifth mannose residues to the dolichol-linked oligosaccharide chain, to produce Man(5)GlcNAc(2)-PP-dolichol core oligosaccharide. Man(5)GlcNAc(2)-PP-dolichol is a substrate for ALG3, the following enzyme in the biosynthetic pathway. The sequence is that of GDP-Man:Man(3)GlcNAc(2)-PP-Dol alpha-1,2-mannosyltransferase (alg11) from Xenopus laevis (African clawed frog).